Reading from the N-terminus, the 622-residue chain is Serine/threonine-protein kinase MAK (622 aa).

The region spanning 4–284 (YTTMRQLGDG…ASQALKHPYF (281 aa)) is the Protein kinase domain. ATP-binding positions include 10-18 (LGDGTYGSV) and Lys33. Asp125 serves as the catalytic Proton acceptor. Thr157 bears the Phosphothreonine; by autocatalysis mark. Tyr159 is subject to Phosphotyrosine; by autocatalysis. The tract at residues 301–373 (QTLHKQLQPP…HHKQPQTMFP (73 aa)) is disordered.

This sequence belongs to the protein kinase superfamily. CMGC Ser/Thr protein kinase family. CDC2/CDKX subfamily. In terms of assembly, interacts with RP1. Interacts with AR and CDK20. Found in a complex containing MAK, AR and NCOA3. Interacts with FZR1 (via WD repeats). Mg(2+) serves as cofactor. Post-translationally, autophosphorylated. Phosphorylated on serine and threonine residues. Expressed mainly in testicular cells at and after meiosis.

The protein resides in the nucleus. The protein localises to the cytoplasm. It is found in the cytoskeleton. It localises to the microtubule organizing center. Its subcellular location is the centrosome. The protein resides in the spindle. The protein localises to the midbody. It is found in the cell projection. It localises to the cilium. Its subcellular location is the photoreceptor outer segment. The protein resides in the photoreceptor inner segment. The enzyme catalyses L-seryl-[protein] + ATP = O-phospho-L-seryl-[protein] + ADP + H(+). It carries out the reaction L-threonyl-[protein] + ATP = O-phospho-L-threonyl-[protein] + ADP + H(+). Its function is as follows. Essential for the regulation of ciliary length and required for the long-term survival of photoreceptors. Could play an important function in spermatogenesis. Phosphorylates FZR1 in a cell cycle-dependent manner. Plays a role in the transcriptional coactivation of AR. This is Serine/threonine-protein kinase MAK (Mak) from Rattus norvegicus (Rat).